The following is a 1223-amino-acid chain: Rho family-interacting cell polarization regulator 1 (1223 aa).

S22 carries the phosphoserine modification. The stretch at 83-112 forms a coiled coil; sequence RGLTAYLEVHQQEQEKLQRQIKESKRNSRL. 2 positions are modified to phosphoserine: S345 and S347. T351 carries the phosphothreonine modification. The tract at residues 371–411 is disordered; sequence NGTAWSLSSESSDDSSSPQLSGTARHSTPKPLVQQPEPLPV. Low complexity-rich tracts occupy residues 376–391 and 399–411; these read SLSSESSDDSSSPQLS and PKPLVQQPEPLPV. S451, S454, and S468 each carry phosphoserine. 2 stretches are compositionally biased toward low complexity: residues 566-586 and 595-655; these read TTIGSAHTTTPSPLTSTGSVP and TPSP…TSPT. 2 disordered regions span residues 566–771 and 856–887; these read TTIG…QHSE and FLNDDEDEDNDGPGDRHTSSPEVVAEDRLDSS. The span at 656-665 shows a compositional bias: polar residues; it reads QEAKMSTHTT. Low complexity predominate over residues 673–688; the sequence is TTTSPISTTESPSPST. Composition is skewed to polar residues over residues 693 to 703 and 725 to 741; these read ISSSSAESTGP and ASCTSYQSLASSGSKPL. S748 carries the post-translational modification Phosphoserine. Residues 748-767 show a composition bias toward low complexity; the sequence is SPEQIPKSPSSSPSSSAPEP. Residues 858–867 are compositionally biased toward acidic residues; sequence NDDEDEDNDG. Residues 868–885 show a composition bias toward basic and acidic residues; that stretch reads PGDRHTSSPEVVAEDRLD. Residues S874 and S875 each carry the phosphoserine modification.

The protein belongs to the RIPOR family. As to quaternary structure, interacts (via N-terminus) with RHOA (GTP-bound form); this interaction links active RHOA to STK24 and STK26 kinases. Interacts with RHOB. Interacts with RHOC. Interacts (via C-terminus) with PDCD10; this interaction occurs in a Rho-independent manner. Interacts (via C-terminus) with STK24; this interaction occurs in a PDCD10-dependent and Rho-independent manner. Interacts (via C-terminus) with STK26; this interaction occurs in a PDCD10-dependent and Rho-independent manner. Interacts (via N-terminus) with 14-3-3 proteins; these interactions occur in a Rho-dependent manner. As to expression, expressed in the kidney exclusively by glomerular podocytes.

The protein localises to the cytoplasm. Its subcellular location is the golgi apparatus. Functionally, downstream effector protein for Rho-type small GTPases that plays a role in cell polarity and directional migration. Acts as an adapter protein, linking active Rho proteins to STK24 and STK26 kinases, and hence positively regulates Golgi reorientation in polarized cell migration upon Rho activation. Involved in the subcellular relocation of STK26 from the Golgi to cytoplasm punctae in a Rho- and PDCD10-dependent manner upon serum stimulation. In Mus musculus (Mouse), this protein is Rho family-interacting cell polarization regulator 1.